The primary structure comprises 119 residues: NAD(P)H-quinone oxidoreductase subunit M (119 aa).

The protein belongs to the complex I NdhM subunit family. In terms of assembly, NDH-1 can be composed of about 15 different subunits; different subcomplexes with different compositions have been identified which probably have different functions.

Its subcellular location is the cellular thylakoid membrane. The catalysed reaction is a plastoquinone + NADH + (n+1) H(+)(in) = a plastoquinol + NAD(+) + n H(+)(out). It carries out the reaction a plastoquinone + NADPH + (n+1) H(+)(in) = a plastoquinol + NADP(+) + n H(+)(out). NDH-1 shuttles electrons from an unknown electron donor, via FMN and iron-sulfur (Fe-S) centers, to quinones in the respiratory and/or the photosynthetic chain. The immediate electron acceptor for the enzyme in this species is believed to be plastoquinone. Couples the redox reaction to proton translocation, and thus conserves the redox energy in a proton gradient. Cyanobacterial NDH-1 also plays a role in inorganic carbon-concentration. This is NAD(P)H-quinone oxidoreductase subunit M from Gloeothece citriformis (strain PCC 7424) (Cyanothece sp. (strain PCC 7424)).